An 850-amino-acid chain; its full sequence is Pre-mRNA-splicing factor SYF1 (850 aa).

HAT repeat units lie at residues 25 to 57 (IQPS…FKQG), 58 to 90 (SPQK…ERTL), 100 to 132 (NSFE…FLMI), 134 to 168 (EKIT…FILK), 171 to 203 (IPSL…KIKE), 281 to 316 (AQFE…FEDS), 477 to 509 (KKQN…LEES), 511 to 543 (GTFH…YLEE), 545 to 579 (KYFE…KFIQ), 584 to 618 (MKLE…FEEQ), and 692 to 726 (GEID…FEKL). Positions 761 to 771 (NNKDDKDDKNQ) are enriched in basic and acidic residues. Residues 761–837 (NNKDDKDDKN…EEEEEEEDQL (77 aa)) are disordered. The span at 772–792 (QQKQQQQQQEKQQQQQQQQQQ) shows a compositional bias: low complexity. Residues 793–812 (ASTLTKSKPVTVSLPETIQY) show a composition bias toward polar residues. Over residues 818 to 836 (NDDEINLDDDEEEEEEEDQ) the composition is skewed to acidic residues.

The protein belongs to the crooked-neck family. In terms of assembly, identified in the spliceosome C complex.

The protein resides in the nucleus. Functionally, involved in pre-mRNA splicing as component of the spliceosome. Involved in transcription-coupled repair (TCR), transcription and pre-mRNA splicing. This chain is Pre-mRNA-splicing factor SYF1 (xab2), found in Dictyostelium discoideum (Social amoeba).